The chain runs to 291 residues: Oxidative stress-responsive serine-rich protein 1 (291 aa).

Positions 29–139 are disordered; the sequence is ISLSVGEGPS…NAGENSTSLD (111 aa). The segment covering 65–83 has biased composition (basic residues); sequence STRKSSRGAVRTQRRRRSK. A compositionally biased stretch (polar residues) spans 95–105; it reads CSTTAPPSSSQ. Threonine 143 carries the phosphothreonine modification.

This is Oxidative stress-responsive serine-rich protein 1 (Oser1) from Mus musculus (Mouse).